Here is a 731-residue protein sequence, read N- to C-terminus: 1,4-alpha-glucan branching enzyme GlgB (731 aa).

Residue D409 is the Nucleophile of the active site. E462 acts as the Proton donor in catalysis.

This sequence belongs to the glycosyl hydrolase 13 family. GlgB subfamily. In terms of assembly, monomer.

It catalyses the reaction Transfers a segment of a (1-&gt;4)-alpha-D-glucan chain to a primary hydroxy group in a similar glucan chain.. It functions in the pathway glycan biosynthesis; glycogen biosynthesis. Catalyzes the formation of the alpha-1,6-glucosidic linkages in glycogen by scission of a 1,4-alpha-linked oligosaccharide from growing alpha-1,4-glucan chains and the subsequent attachment of the oligosaccharide to the alpha-1,6 position. The polypeptide is 1,4-alpha-glucan branching enzyme GlgB (Roseobacter denitrificans (strain ATCC 33942 / OCh 114) (Erythrobacter sp. (strain OCh 114))).